A 130-amino-acid chain; its full sequence is B1 protein (130 aa).

The N-terminal stretch at 1 to 12 is a signal peptide; it reads LTSLILLVAVQA. Cystine bridges form between cysteine 28–cysteine 59 and cysteine 99–cysteine 116.

This sequence belongs to the PBP/GOBP family. Post-translationally, N-glycosylated. Tubular accessory sex gland.

The protein localises to the secreted. Functionally, may be a carrier protein for lipids. This Tenebrio molitor (Yellow mealworm beetle) protein is B1 protein.